We begin with the raw amino-acid sequence, 182 residues long: Adenylate kinase (182 aa).

12–17 (GAGKGT) contributes to the ATP binding site. The segment at 32-61 (STGELLRKEIEMNTALGIQVKDIMNRGELV) is NMP. Residues Thr-33, Arg-38, 59-61 (ELV), 85-88 (GYPR), and Gln-92 contribute to the AMP site. The interval 126 to 132 (LRGRKDD) is LID. An ATP-binding site is contributed by Arg-127. AMP is bound by residues Arg-129 and Arg-140. Arg-168 serves as a coordination point for ATP.

Belongs to the adenylate kinase family. In terms of assembly, monomer.

It localises to the cytoplasm. The enzyme catalyses AMP + ATP = 2 ADP. It participates in purine metabolism; AMP biosynthesis via salvage pathway; AMP from ADP: step 1/1. Catalyzes the reversible transfer of the terminal phosphate group between ATP and AMP. Plays an important role in cellular energy homeostasis and in adenine nucleotide metabolism. The polypeptide is Adenylate kinase (Prochlorococcus marinus (strain MIT 9301)).